The chain runs to 253 residues: Coenzyme F420:L-glutamate ligase (253 aa).

Residues 9–12, 38–39, and Lys43 each bind GTP; these read LPEI and ST. Residue Asp113 participates in a divalent metal cation binding. Asn116 is a GTP binding site. A divalent metal cation-binding residues include Asp148, Thr149, and Glu206. A GTP-binding site is contributed by 204–211; sequence AGEGDDGT.

It belongs to the CofE family. In terms of assembly, homodimer. Requires Mg(2+) as cofactor. The cofactor is Mn(2+). K(+) serves as cofactor.

It catalyses the reaction oxidized coenzyme F420-0 + GTP + L-glutamate = oxidized coenzyme F420-1 + GDP + phosphate + H(+). The catalysed reaction is oxidized coenzyme F420-1 + GTP + L-glutamate = oxidized coenzyme F420-2 + GDP + phosphate + H(+). The protein operates within cofactor biosynthesis; coenzyme F420 biosynthesis. Catalyzes the GTP-dependent successive addition of two or more gamma-linked L-glutamates to the L-lactyl phosphodiester of 7,8-didemethyl-8-hydroxy-5-deazariboflavin (F420-0) to form coenzyme F420-0-glutamyl-glutamate (F420-2) or polyglutamated F420 derivatives. The chain is Coenzyme F420:L-glutamate ligase from Natronomonas pharaonis (strain ATCC 35678 / DSM 2160 / CIP 103997 / JCM 8858 / NBRC 14720 / NCIMB 2260 / Gabara) (Halobacterium pharaonis).